Here is a 601-residue protein sequence, read N- to C-terminus: Elongation factor 4 (601 aa).

The tr-type G domain maps to 7 to 189; the sequence is DNIRNFSIVA…AIVKRLPPPK (183 aa). GTP is bound by residues 19 to 24 and 136 to 139; these read DHGKST and NKVD.

The protein belongs to the TRAFAC class translation factor GTPase superfamily. Classic translation factor GTPase family. LepA subfamily.

It is found in the cell inner membrane. The catalysed reaction is GTP + H2O = GDP + phosphate + H(+). Functionally, required for accurate and efficient protein synthesis under certain stress conditions. May act as a fidelity factor of the translation reaction, by catalyzing a one-codon backward translocation of tRNAs on improperly translocated ribosomes. Back-translocation proceeds from a post-translocation (POST) complex to a pre-translocation (PRE) complex, thus giving elongation factor G a second chance to translocate the tRNAs correctly. Binds to ribosomes in a GTP-dependent manner. This chain is Elongation factor 4, found in Methylorubrum populi (strain ATCC BAA-705 / NCIMB 13946 / BJ001) (Methylobacterium populi).